Consider the following 328-residue polypeptide: Gonadotropin-releasing hormone receptor (328 aa).

The Extracellular segment spans residues 1–38 (MANRAYLEQKQTQCSIINSSFSMTHRDLPTLTLSGKIR). A glycan (N-linked (GlcNAc...) asparagine) is linked at asparagine 18. Residues 39 to 58 (VMVTFFLFLVSTAFNASFLM) form a helical membrane-spanning segment. The Cytoplasmic segment spans residues 59 to 77 (KLQRQTQKKEEVKKLTRMK). A helical transmembrane segment spans residues 78–97 (VLLKHLTLANLLETVIVMPL). At 98-115 (DGIWNVTVQWYAGEFLCK) the chain is on the extracellular side. An N-linked (GlcNAc...) asparagine glycan is attached at asparagine 102. Cysteine 114 and cysteine 196 are disulfide-bonded. A helical membrane pass occupies residues 116–137 (ALSYLKLFSMYAPAFMMVVISL). Residues 138–164 (DRFLAITRPLAVKSNTKVGQSLIAVAW) lie on the Cytoplasmic side of the membrane. Residues 165–184 (FLSIVLAGPQLYIFRMIYVE) traverse the membrane as a helical segment. The Extracellular segment spans residues 185–212 (DISGQTGNFSQCVTHCSFPEWWQEAFYN). An N-linked (GlcNAc...) asparagine glycan is attached at asparagine 192. Residues 213-232 (LLTFSCLFIGPLLIMLVCNA) form a helical membrane-spanning segment. At 233–281 (KIIFTLTQVLHQDPHELQLNRSKNNIPRARLRTLKMTVAFATLFTICWT) the chain is on the cytoplasmic side. Residues 282–300 (PYYVLGIWYWFDPEMLNRV) form a helical membrane-spanning segment. Residues 301–306 (SDPVNH) are Extracellular-facing. Residues 307–326 (FFFLFGLLNPCFDPLIYGYF) form a helical membrane-spanning segment. Residues 327 to 328 (SL) are Cytoplasmic-facing.

This sequence belongs to the G-protein coupled receptor 1 family.

It localises to the cell membrane. Its function is as follows. Receptor for gonadotropin releasing hormone (GnRH) that mediates the action of GnRH to stimulate the secretion of the gonadotropic hormones luteinizing hormone (LH) and follicle-stimulating hormone (FSH). This receptor mediates its action by association with G-proteins that activate a phosphatidylinositol-calcium second messenger system. The sequence is that of Gonadotropin-releasing hormone receptor (GNRHR) from Trichosurus vulpecula (Brush-tailed possum).